Consider the following 937-residue polypeptide: ABC transporter A family member 4 (937 aa).

7 helical membrane passes run 34-54 (LIVI…LFDT), 340-360 (IASV…FPVI), 394-414 (FLAI…AIGL), 423-443 (SIQF…AFLV), 455-475 (VAAY…FQFM), 478-498 (GLSF…FSLY), and 528-548 (AMDE…IAAY). The 235-residue stretch at 618–852 (DKLKKVYPGR…YGGSYVLTMT (235 aa)) folds into the ABC transporter domain. Residue 653-660 (GPNGAGKT) participates in ATP binding.

The protein belongs to the ABC transporter superfamily. ABCA family. CPR flippase (TC 3.A.1.211) subfamily.

It localises to the membrane. The sequence is that of ABC transporter A family member 4 (ABCA4) from Arabidopsis thaliana (Mouse-ear cress).